We begin with the raw amino-acid sequence, 148 residues long: Large ribosomal subunit protein bL9 (148 aa).

It belongs to the bacterial ribosomal protein bL9 family.

In terms of biological role, binds to the 23S rRNA. The protein is Large ribosomal subunit protein bL9 of Acinetobacter baumannii (strain AB307-0294).